The primary structure comprises 334 residues: Oligopeptide transport ATP-binding protein OppF (334 aa).

The ABC transporter domain maps to 12–265 (LEIADLKVHF…PLHPYTKALM (254 aa)). Position 57-64 (57-64 (GESGCGKS)) interacts with ATP.

The protein belongs to the ABC transporter superfamily. The complex is composed of two ATP-binding proteins (OppD and OppF), two transmembrane proteins (OppB and OppC) and a solute-binding protein (OppA).

Its subcellular location is the cell inner membrane. The enzyme catalyses a [peptide](out) + ATP + H2O = a [peptide](in) + ADP + phosphate + H(+). It catalyses the reaction L-alanyl-gamma-D-glutamyl-meso-2,6-diaminopimelate(out) + ATP + H2O = L-alanyl-gamma-D-glutamyl-meso-2,6-diaminopimelate(in) + ADP + phosphate + H(+). Part of the ABC transporter complex OppABCDF involved in the uptake of oligopeptides, including the cell wall murein tripeptide L-alanyl-gamma-D-glutamyl-meso-diaminopimelate. Probably responsible for energy coupling to the transport system. Plays an important nutritional role and is involved in the recycling of cell wall peptides. This Salmonella typhimurium (strain LT2 / SGSC1412 / ATCC 700720) protein is Oligopeptide transport ATP-binding protein OppF.